A 413-amino-acid polypeptide reads, in one-letter code: Gamma-glutamyl phosphate reductase (413 aa).

It belongs to the gamma-glutamyl phosphate reductase family.

Its subcellular location is the cytoplasm. The enzyme catalyses L-glutamate 5-semialdehyde + phosphate + NADP(+) = L-glutamyl 5-phosphate + NADPH + H(+). It participates in amino-acid biosynthesis; L-proline biosynthesis; L-glutamate 5-semialdehyde from L-glutamate: step 2/2. In terms of biological role, catalyzes the NADPH-dependent reduction of L-glutamate 5-phosphate into L-glutamate 5-semialdehyde and phosphate. The product spontaneously undergoes cyclization to form 1-pyrroline-5-carboxylate. This Lactococcus lactis subsp. cremoris (strain SK11) protein is Gamma-glutamyl phosphate reductase.